The chain runs to 302 residues: tRNA pseudouridine synthase B (302 aa).

The active-site Nucleophile is the Asp48.

Belongs to the pseudouridine synthase TruB family. Type 1 subfamily.

It catalyses the reaction uridine(55) in tRNA = pseudouridine(55) in tRNA. In terms of biological role, responsible for synthesis of pseudouridine from uracil-55 in the psi GC loop of transfer RNAs. This chain is tRNA pseudouridine synthase B, found in Xylella fastidiosa (strain Temecula1 / ATCC 700964).